Here is a 986-residue protein sequence, read N- to C-terminus: Probable ATP-dependent RNA helicase ddx42 (986 aa).

3 disordered regions span residues 1 to 149 (MSKR…DEDD), 165 to 192 (AAID…DIDN), and 206 to 252 (QLAN…IEPL). The span at 29-82 (SNINNNNNSNNNNNNNNNNNNNNNNNNNKNNIGTGINLNIKNNNNINNNNNKSG) shows a compositional bias: low complexity. The segment covering 105–117 (PPKSSMTTLNKSP) has biased composition (polar residues). Low complexity predominate over residues 119–137 (NFENASSNNNNNNNNNNQE). Residues 217 to 236 (DDDVDYSSLDDDDGYFDDEE) are compositionally biased toward acidic residues. Residues 305–333 (TSFGHYGFDDILLQAIAKQSIETPTPIQK) carry the Q motif motif. Positions 336-511 (IPIALSGRDL…RTILSDPIKI (176 aa)) constitute a Helicase ATP-binding domain. Residue 349–356 (AKTGSGKT) coordinates ATP. The DEAD box motif lies at 459–462 (DEAD). The Helicase C-terminal domain occupies 522 to 684 (DITQIVQVLK…FVPPELIDVA (163 aa)). Residues 688-986 (PHFKRERGGG…FNQRSQYNRR (299 aa)) are disordered. A compositionally biased stretch (gly residues) spans 696–723 (GGGGGSNRGRGRGGGGVGYRRNSRGGGV). Low complexity-rich tracts occupy residues 753–764 (NPNNTDNSEINN) and 771–978 (NNEN…NNFN).

The protein belongs to the DEAD box helicase family. DDX42 subfamily.

It localises to the nucleus. It carries out the reaction ATP + H2O = ADP + phosphate + H(+). In terms of biological role, probable ATP-dependent RNA helicase which may bind to partially double-stranded RNAs (dsRNAs) in order to unwind RNA secondary structures. The protein is Probable ATP-dependent RNA helicase ddx42 (ddx42) of Dictyostelium discoideum (Social amoeba).